Reading from the N-terminus, the 168-residue chain is Transcriptional regulator MraZ (168 aa).

SpoVT-AbrB domains follow at residues 8–51 (EYNQ…GGDR) and 90–140 (ALNM…KADT).

The protein belongs to the MraZ family. As to quaternary structure, forms oligomers.

The protein localises to the cytoplasm. It localises to the nucleoid. The protein is Transcriptional regulator MraZ of Cereibacter sphaeroides (strain ATCC 17025 / ATH 2.4.3) (Rhodobacter sphaeroides).